Here is a 326-residue protein sequence, read N- to C-terminus: Thiamine thiazole synthase (326 aa).

Residues C87, 108-109, G116, and V181 contribute to the substrate site; that span reads EA. C215 bears the 2,3-didehydroalanine (Cys) mark. Residues D217, H232, M284, and 294–296 each bind substrate; that span reads RMG.

It belongs to the THI4 family. In terms of assembly, homooctamer. It depends on Fe cation as a cofactor. In terms of processing, during the catalytic reaction, a sulfide is transferred from Cys-215 to a reaction intermediate, generating a dehydroalanine residue.

Its subcellular location is the cytoplasm. It is found in the nucleus. The catalysed reaction is [ADP-thiazole synthase]-L-cysteine + glycine + NAD(+) = [ADP-thiazole synthase]-dehydroalanine + ADP-5-ethyl-4-methylthiazole-2-carboxylate + nicotinamide + 3 H2O + 2 H(+). Functionally, involved in biosynthesis of the thiamine precursor thiazole. Catalyzes the conversion of NAD and glycine to adenosine diphosphate 5-(2-hydroxyethyl)-4-methylthiazole-2-carboxylic acid (ADT), an adenylated thiazole intermediate. The reaction includes an iron-dependent sulfide transfer from a conserved cysteine residue of the protein to a thiazole intermediate. The enzyme can only undergo a single turnover, which suggests it is a suicide enzyme. May have additional roles in adaptation to various stress conditions and in DNA damage tolerance. This Sclerotinia sclerotiorum (strain ATCC 18683 / 1980 / Ss-1) (White mold) protein is Thiamine thiazole synthase.